The sequence spans 2671 residues: Inositol 1,4,5-trisphosphate-gated calcium channel ITPR3 (2671 aa).

The Cytoplasmic portion of the chain corresponds to 1–2202; sequence MSEMSSFLHI…LIYWFSRRMT (2202 aa). MIR domains lie at 113 to 173, 174 to 224, 232 to 288, 295 to 372, and 378 to 434; these read GDVV…LRSN, GDNV…INLF, EEVL…VEVV, GGAG…LDPT, and DSFV…IVSV. The 1D-myo-inositol 1,4,5-trisphosphate site is built by Arg266, Thr268, Leu269, and Arg270. Residues 322–342 are disordered; the sequence is SYKGDASDPKAAGMGAQGRTG. Residues Arg503, Lys507, Arg510, Tyr567, Arg568, and Lys569 each coordinate 1D-myo-inositol 1,4,5-trisphosphate. Arg743 contributes to the Ca(2+) binding site. Phosphoserine occurs at positions 916 and 934. Residues Glu1122 and Glu1125 each coordinate Ca(2+). Disordered stretches follow at residues 1132 to 1163 and 1809 to 1848; these read GSGKGEEVEAGAAKDKKERPTDEEGFLHPPGE and NDLGSQPHEDREPVDPTTKGRVASFSIPGSSSRYSLGPSL. Ser1813, Ser1832, and Ser1834 each carry phosphoserine. Ca(2+) is bound by residues Glu1882 and Glu1946. ATP-binding residues include Ala1996, Glu2149, and Lys2152. The chain crosses the membrane as a helical span at residues 2203–2223; the sequence is LWGSISFNLAVFINIIIAFFY. The Extracellular portion of the chain corresponds to 2224 to 2235; it reads PYMEGASTGVLD. A helical transmembrane segment spans residues 2236–2256; sequence SPLISLLFWILICFSIAALFT. Residues 2257–2264 are Cytoplasmic-facing; it reads KRYSIRPL. The chain crosses the membrane as a helical span at residues 2265–2285; the sequence is IVALILRSIYYLGIGPTLNIL. Residues 2286-2325 are Extracellular-facing; the sequence is GALNLTNKIVFVVSFVGNRGTFIRGYKAMVMDMEFLYHVG. The chain crosses the membrane as a helical span at residues 2326-2346; the sequence is YILTSVLGLFAHELFYSILLF. Residues 2347 to 2368 lie on the Cytoplasmic side of the membrane; sequence DLIYREETLFNVIKSVTRNGRS. A helical membrane pass occupies residues 2369–2389; it reads ILLTALLALILVYLFSIVGFL. The Extracellular portion of the chain corresponds to 2390-2496; that stretch reads FLKDDFILEV…ESLFPARVVY (107 aa). A disulfide bridge connects residues Cys2455 and Cys2461. The chain crosses the membrane as a helical span at residues 2497–2517; it reads DLLFFFIVIIIVLNLIFGVII. The Cytoplasmic segment spans residues 2518–2671; that stretch reads DTFADLRSEK…FVDVQNCISR (154 aa). 2 residues coordinate ATP: Cys2538 and Phe2539. Cys2538 serves as a coordination point for Zn(2+). The Zn(2+) site is built by Cys2541 and His2558. Lys2560, His2563, Asn2564, and Met2565 together coordinate ATP. His2563 is a Zn(2+) binding site. A Ca(2+)-binding site is contributed by Thr2581. Phosphoserine occurs at positions 2609 and 2670.

Belongs to the InsP3 receptor family. As to quaternary structure, homotetramer. Homodimer. Interacts with TRPC1, TRPC3 and TRPC4. Interacts with TRPV4. Interacts with SIGMAR1. Interacts with PML and AKT1. Interacts with IRAG2 (via coiled-coil domain). Interacts with CABP1. Interacts with TMBIM4/LFG4. Interacts with CEMIP. Interacts with TESPA1. Interacts with TMEM203. Interacts with BOK; regulates ITPR3 expression. Interacts with BCL2L10. Interacts with CHGA and CHGB. In terms of processing, phosphorylated by AKT1 on serine and/or threonine residues. In terms of tissue distribution, expressed in intestinal crypt and villus epithelial cells.

The protein localises to the endoplasmic reticulum membrane. It localises to the cytoplasmic vesicle. It is found in the secretory vesicle membrane. The catalysed reaction is Ca(2+)(in) = Ca(2+)(out). Its activity is regulated as follows. Inositol 1,4,5-trisphosphate-gated calcium channel is regulated by cytosolic calcium in a biphasic manner. At low concentrations, cytosolic calcium binds at a high-affinity juxtamembrane domain (JD) calcium binding site, allowing ITPR3 to activate by escaping a low-energy resting state through an ensemble of preactivated states. At high cytosolic calcium concentrations, ITPR3 preferentially enters an inhibited state stabilized by calcium binding at a second, low-affinity cytoplasmic domain (CD) calcium binding site. Functionally, inositol 1,4,5-trisphosphate-gated calcium channel that, upon 1D-myo-inositol 1,4,5-trisphosphate binding, transports calcium from the endoplasmic reticulum lumen to cytoplasm, thus releasing the intracellular calcium and therefore participates in cellular calcium ion homeostasis. 1D-myo-inositol 1,4,5-trisphosphate binds to the ligand-free channel without altering its global conformation, yielding the low-energy resting state, then progresses through resting-to preactivated transitions to the higher energy preactivated state, which increases affinity for calcium, promoting binding of the low basal cytosolic calcium at the juxtamembrane domain (JD) site, favoring the transition through the ensemble of high-energy intermediate states along the trajectory to the fully-open activated state. Upon opening, releases calcium in the cytosol where it can bind to the low-affinity cytoplasmic domain (CD) site and stabilizes the inhibited state to terminate calcium release. The sequence is that of Inositol 1,4,5-trisphosphate-gated calcium channel ITPR3 from Homo sapiens (Human).